Reading from the N-terminus, the 407-residue chain is Arginine deiminase (407 aa).

The active-site Amidino-cysteine intermediate is the Cys397.

The protein belongs to the arginine deiminase family.

It localises to the cytoplasm. The catalysed reaction is L-arginine + H2O = L-citrulline + NH4(+). It functions in the pathway amino-acid degradation; L-arginine degradation via ADI pathway; carbamoyl phosphate from L-arginine: step 1/2. This is Arginine deiminase from Vibrio cholerae serotype O1 (strain ATCC 39541 / Classical Ogawa 395 / O395).